Consider the following 963-residue polypeptide: Glycine dehydrogenase (decarboxylating) (963 aa).

At lysine 710 the chain carries N6-(pyridoxal phosphate)lysine.

This sequence belongs to the GcvP family. The glycine cleavage system is composed of four proteins: P, T, L and H. Pyridoxal 5'-phosphate serves as cofactor.

It catalyses the reaction N(6)-[(R)-lipoyl]-L-lysyl-[glycine-cleavage complex H protein] + glycine + H(+) = N(6)-[(R)-S(8)-aminomethyldihydrolipoyl]-L-lysyl-[glycine-cleavage complex H protein] + CO2. In terms of biological role, the glycine cleavage system catalyzes the degradation of glycine. The P protein binds the alpha-amino group of glycine through its pyridoxal phosphate cofactor; CO(2) is released and the remaining methylamine moiety is then transferred to the lipoamide cofactor of the H protein. In Pseudoalteromonas translucida (strain TAC 125), this protein is Glycine dehydrogenase (decarboxylating).